We begin with the raw amino-acid sequence, 345 residues long: Type II methyltransferase M.AplI (345 aa).

Residues 25–325 (LVVLDLFAGC…KSVKMTLENK (301 aa)) form the SAM-dependent MTase C5-type domain. Cys-93 is a catalytic residue.

The protein belongs to the class I-like SAM-binding methyltransferase superfamily. C5-methyltransferase family.

The catalysed reaction is a 2'-deoxycytidine in DNA + S-adenosyl-L-methionine = a 5-methyl-2'-deoxycytidine in DNA + S-adenosyl-L-homocysteine + H(+). In terms of biological role, a methylase, recognizes the double-stranded sequence 5'-CTGCAG-3', methylates C-4 on both strands, and protects the DNA from cleavage by the AplI endonuclease. This Arthrospira platensis (strain NIES-39 / UTEX 3086 / IAM M-135) (Spirulina platensis) protein is Type II methyltransferase M.AplI (aplIM).